The chain runs to 195 residues: Glutamyl-tRNA(Gln) amidotransferase subunit C, mitochondrial (195 aa).

The transit peptide at Met1–Cys18 directs the protein to the mitochondrion.

This sequence belongs to the GatC family. In terms of assembly, subunit of the heterotrimeric GatCAB amidotransferase (AdT) complex, composed of A, B and C subunits.

Its subcellular location is the mitochondrion. It carries out the reaction L-glutamyl-tRNA(Gln) + L-glutamine + ATP + H2O = L-glutaminyl-tRNA(Gln) + L-glutamate + ADP + phosphate + H(+). Its function is as follows. Allows the formation of correctly charged Gln-tRNA(Gln) through the transamidation of misacylated Glu-tRNA(Gln) in the mitochondria. The reaction takes place in the presence of glutamine and ATP through an activated gamma-phospho-Glu-tRNA(Gln). The chain is Glutamyl-tRNA(Gln) amidotransferase subunit C, mitochondrial from Brugia malayi (Filarial nematode worm).